A 122-amino-acid polypeptide reads, in one-letter code: Large ribosomal subunit protein bL12 (122 aa).

Belongs to the bacterial ribosomal protein bL12 family. Homodimer. Part of the ribosomal stalk of the 50S ribosomal subunit. Forms a multimeric L10(L12)X complex, where L10 forms an elongated spine to which 2 to 4 L12 dimers bind in a sequential fashion. Binds GTP-bound translation factors.

Forms part of the ribosomal stalk which helps the ribosome interact with GTP-bound translation factors. Is thus essential for accurate translation. This is Large ribosomal subunit protein bL12 from Streptococcus pneumoniae serotype 19F (strain G54).